A 204-amino-acid chain; its full sequence is uncharacterized protein (204 aa).

The N-terminal stretch at 1-16 is a signal peptide; that stretch reads MKYTFLAVLSAVTVLA.

It is found in the secreted. This is an uncharacterized protein from Arthroderma benhamiae (strain ATCC MYA-4681 / CBS 112371) (Trichophyton mentagrophytes).